Reading from the N-terminus, the 96-residue chain is MNIRPLHDRVIIKRMEEERTTAGGIVIPDSATEKPVRGEVIAVGKGKILENGEVRALDVKVGDKVLFGKYSGTEIKVDGQEVLVMREEDIMGVLEG.

This sequence belongs to the GroES chaperonin family. As to quaternary structure, heptamer of 7 subunits arranged in a ring. Interacts with the chaperonin GroEL.

The protein localises to the cytoplasm. In terms of biological role, together with the chaperonin GroEL, plays an essential role in assisting protein folding. The GroEL-GroES system forms a nano-cage that allows encapsulation of the non-native substrate proteins and provides a physical environment optimized to promote and accelerate protein folding. GroES binds to the apical surface of the GroEL ring, thereby capping the opening of the GroEL channel. The protein is Co-chaperonin GroES of Thioalkalivibrio sulfidiphilus (strain HL-EbGR7).